A 324-amino-acid polypeptide reads, in one-letter code: bZIP transcription factor 46 (324 aa).

The tract at residues 106-127 is disordered; the sequence is LGGSDDEDPAAAAAAAAPAQRQ. The span at 115–124 shows a compositional bias: low complexity; that stretch reads AAAAAAAAPA. In terms of domain architecture, bZIP spans 242 to 287; it reads VERRQRRMIKNRESAARSRARKQAYIMELEAEVAKLKEQKAELQKK. The basic motif stretch occupies residues 244-263; it reads RRQRRMIKNRESAARSRARK. Positions 270–284 are leucine-zipper; that stretch reads LEAEVAKLKEQKAEL.

Interacts with MODD. Interacts with SAPK2, SAPK6 and SAPK9. Phosphorylated on serine and threonine residues by SAPK2, SAPK6 and SAPK9. Phosphorylation is required for full transactivation activity. As to expression, expressed in roots, shoots, leaves, flag leaves, stems, flowers and panicles. Widely expressed.

Its subcellular location is the nucleus. In terms of biological role, transcription factor involved in abscisic acid (ABA) signaling pathway. Transcription factor activity is fully activated by ABA. Acts as a positive regulator of the expression of abiotic stress-responsive genes through an ABA-dependent signaling pathway. Acts as a positive regulator of ABA signaling and drought stress tolerance. Plays an important role in ABA and auxin responses. Involved in ABA signaling and stress responses by directly binding to the ABA-responsive element (ABRE)-containing genes, especially WRKY family genes. Modulates response to auxin. Suppresses auxin signaling by targeting ABRE-containing genes related to auxin metabolism or signaling. The chain is bZIP transcription factor 46 from Oryza sativa subsp. japonica (Rice).